The primary structure comprises 232 residues: Sugar fermentation stimulation protein homolog (232 aa).

This sequence belongs to the SfsA family.

This Geobacter sulfurreducens (strain ATCC 51573 / DSM 12127 / PCA) protein is Sugar fermentation stimulation protein homolog.